The sequence spans 593 residues: La-related protein 7 (593 aa).

Over residues M1–N11 the composition is skewed to polar residues. Positions M1–K28 are disordered. Over residues K12–D24 the composition is skewed to basic and acidic residues. The 92-residue stretch at R30–P121 folds into the HTH La-type RNA-binding domain. The RRM domain maps to R127 to T205. The disordered stretch occupies residues P191–D363. The segment covering K231–A240 has biased composition (basic residues). Residues A248–I259 show a composition bias toward acidic residues. Composition is skewed to basic and acidic residues over residues E295 to R307, S314 to P340, and Q348 to D363. One can recognise a xRRM domain in the interval Q461 to K574.

Belongs to the LARP7 family. Core component of the 7SK RNP complex. Associates with box C/D small nucleolar ribonucleoprotein (snoRNP) complexes.

It localises to the nucleus. The protein localises to the nucleoplasm. Functionally, RNA-binding protein that specifically binds distinct small nuclear RNA (snRNAs) and regulates their processing and function. Specifically binds the 7SK snRNA (7SK RNA) and acts as a core component of the 7SK ribonucleoprotein (RNP) complex, thereby acting as a negative regulator of transcription elongation by RNA polymerase II. The 7SK RNP complex sequesters the positive transcription elongation factor b (P-TEFb) in a large inactive 7SK RNP complex preventing RNA polymerase II phosphorylation and subsequent transcriptional elongation. The 7SK RNP complex also promotes snRNA gene transcription by RNA polymerase II via interaction with the little elongation complex (LEC). LARP7 specifically binds to the highly conserved 3'-terminal U-rich stretch of 7SK RNA; on stimulation, remains associated with 7SK RNA, whereas P-TEFb is released from the complex. LARP7 also acts as a regulator of mRNA splicing fidelity by promoting U6 snRNA processing. Specifically binds U6 snRNAs and associates with a subset of box C/D RNP complexes: promotes U6 snRNA 2'-O-methylation by facilitating U6 snRNA loading into box C/D RNP complexes. U6 snRNA 2'-O-methylation is required for mRNA splicing fidelity. In Xenopus tropicalis (Western clawed frog), this protein is La-related protein 7.